A 596-amino-acid chain; its full sequence is Protein FlbA (596 aa).

TPR repeat units follow at residues Gly-91–His-124, Val-159–Ala-192, Ala-193–Phe-226, and Lys-228–Pro-260.

The chain is Protein FlbA (flbA) from Caulobacter vibrioides (strain ATCC 19089 / CIP 103742 / CB 15) (Caulobacter crescentus).